The chain runs to 303 residues: Probable cell division protein WhiA (303 aa).

The H-T-H motif DNA-binding region spans Ser272–Leu303.

This sequence belongs to the WhiA family.

In terms of biological role, involved in cell division and chromosome segregation. In Streptococcus pneumoniae (strain ATCC 700669 / Spain 23F-1), this protein is Probable cell division protein WhiA.